Here is a 233-residue protein sequence, read N- to C-terminus: Cytidylate kinase (233 aa).

ATP is bound at residue 15 to 23; that stretch reads GPSGAGKSS.

The protein belongs to the cytidylate kinase family. Type 1 subfamily.

It is found in the cytoplasm. It carries out the reaction CMP + ATP = CDP + ADP. It catalyses the reaction dCMP + ATP = dCDP + ADP. The protein is Cytidylate kinase of Citrifermentans bemidjiense (strain ATCC BAA-1014 / DSM 16622 / JCM 12645 / Bem) (Geobacter bemidjiensis).